The primary structure comprises 114 residues: Endoribonuclease MazF2 (114 aa).

Belongs to the PemK/MazF family. Probably forms a complex with cognate antitoxin MazE2.

Functionally, toxic component of a type II toxin-antitoxin (TA) system. Acts as an endoribonuclease on single-strand RNA, cleaving between the second and third bases in the sequences CUCCU and UUCCU. Neutralized by coexpression with cognate antitoxin MazE2. This Mycobacterium bovis (strain ATCC BAA-935 / AF2122/97) protein is Endoribonuclease MazF2 (mazF2).